The primary structure comprises 283 residues: Dihydropteroate synthase type-1 (283 aa).

Positions 6–262 (VTVFGILNLT…APGDLRSAIT (257 aa)) constitute a Pterin-binding domain. Asparagine 13 is a Mg(2+) binding site. (7,8-dihydropterin-6-yl)methyl diphosphate is bound by residues aspartate 86, asparagine 105, aspartate 177, lysine 216, and 250-252 (RTH).

This sequence belongs to the DHPS family. As to quaternary structure, homodimer or homotrimer. Mg(2+) is required as a cofactor.

The enzyme catalyses (7,8-dihydropterin-6-yl)methyl diphosphate + 4-aminobenzoate = 7,8-dihydropteroate + diphosphate. Its pathway is cofactor biosynthesis; tetrahydrofolate biosynthesis; 7,8-dihydrofolate from 2-amino-4-hydroxy-6-hydroxymethyl-7,8-dihydropteridine diphosphate and 4-aminobenzoate: step 1/2. Functionally, catalyzes the condensation of para-aminobenzoate (pABA) with 6-hydroxymethyl-7,8-dihydropterin diphosphate (DHPt-PP) to form 7,8-dihydropteroate (H2Pte), the immediate precursor of folate derivatives. Implicated in resistance to sulfonamide. This Mycolicibacterium fortuitum (Mycobacterium fortuitum) protein is Dihydropteroate synthase type-1 (sulI).